The sequence spans 354 residues: Variable large protein 15/16 (354 aa).

A signal peptide spans 1–18; it reads MRKRISAIIMTLFMVLVS. A lipid anchor (N-palmitoyl cysteine) is attached at C19. A lipid anchor (S-diacylglycerol cysteine) is attached at C19. The disordered stretch occupies residues 333–354; the sequence is EDKSVEATNTAEATTSGQQAKN. The span at 338–354 shows a compositional bias: polar residues; it reads EATNTAEATTSGQQAKN.

It belongs to the variable large protein (Vlp) family. Delta subfamily.

It is found in the cell outer membrane. Its function is as follows. The Vlp and Vsp proteins are antigenically distinct proteins, only one vlp or vsp gene is transcriptionally active at any one time. Switching between these genes is a mechanism of host immune response evasion. This chain is Variable large protein 15/16, found in Borrelia hermsii.